The primary structure comprises 720 residues: Nucleolar protein 11 (720 aa).

The interval 365 to 392 (KDPETKPSNAGAQKKTRERKTNANAGNG) is disordered.

The protein localises to the nucleus. It is found in the nucleolus. Ribosome biogenesis factor. May be required for both optimal rDNA transcription and pre-rRNA processing. The sequence is that of Nucleolar protein 11 (nol11) from Xenopus laevis (African clawed frog).